We begin with the raw amino-acid sequence, 58 residues long: Large ribosomal subunit protein uL30 (58 aa).

The protein belongs to the universal ribosomal protein uL30 family. In terms of assembly, part of the 50S ribosomal subunit.

The chain is Large ribosomal subunit protein uL30 from Porphyromonas gingivalis (strain ATCC 33277 / DSM 20709 / CIP 103683 / JCM 12257 / NCTC 11834 / 2561).